The following is a 288-amino-acid chain: Structure-specific endonuclease subunit SLX1 (288 aa).

The region spanning 7 to 90 (PFYGVYLLQS…QHPNMTRLIT (84 aa)) is the GIY-YIG domain.

Belongs to the SLX1 family. As to quaternary structure, forms a heterodimer with SLX4. The cofactor is a divalent metal cation.

It localises to the nucleus. Catalytic subunit of the SLX1-SLX4 structure-specific endonuclease that resolves DNA secondary structures generated during DNA repair and recombination. Has endonuclease activity towards branched DNA substrates, introducing single-strand cuts in duplex DNA close to junctions with ss-DNA. The sequence is that of Structure-specific endonuclease subunit SLX1 from Yarrowia lipolytica (strain CLIB 122 / E 150) (Yeast).